Consider the following 113-residue polypeptide: MHRDLHMMSDRSEDDGDTSILTATKPKTKRPPLYKVLLLNDDFTPMEFVVHVLERFFGLNHAQAFEIMLTVHKKGVAVVGVFSHEIAETKVAQVMDFARRHQHPLQCTMEKEE.

Residues 1-11 (MHRDLHMMSDR) show a composition bias toward basic and acidic residues. The segment at 1-25 (MHRDLHMMSDRSEDDGDTSILTATK) is disordered.

The protein belongs to the ClpS family. In terms of assembly, binds to the N-terminal domain of the chaperone ClpA.

Its function is as follows. Involved in the modulation of the specificity of the ClpAP-mediated ATP-dependent protein degradation. The protein is ATP-dependent Clp protease adapter protein ClpS of Roseobacter denitrificans (strain ATCC 33942 / OCh 114) (Erythrobacter sp. (strain OCh 114)).